The following is a 135-amino-acid chain: ATP synthase epsilon chain (135 aa).

Belongs to the ATPase epsilon chain family. As to quaternary structure, F-type ATPases have 2 components, CF(1) - the catalytic core - and CF(0) - the membrane proton channel. CF(1) has five subunits: alpha(3), beta(3), gamma(1), delta(1), epsilon(1). CF(0) has three main subunits: a, b and c.

The protein resides in the cell inner membrane. Its function is as follows. Produces ATP from ADP in the presence of a proton gradient across the membrane. The polypeptide is ATP synthase epsilon chain (Allorhizobium ampelinum (strain ATCC BAA-846 / DSM 112012 / S4) (Agrobacterium vitis (strain S4))).